The primary structure comprises 178 residues: ATP-dependent protease subunit HslV (178 aa).

The active site involves T8. 3 residues coordinate Na(+): G163, C166, and T169.

It belongs to the peptidase T1B family. HslV subfamily. In terms of assembly, a double ring-shaped homohexamer of HslV is capped on each side by a ring-shaped HslU homohexamer. The assembly of the HslU/HslV complex is dependent on binding of ATP.

Its subcellular location is the cytoplasm. It carries out the reaction ATP-dependent cleavage of peptide bonds with broad specificity.. Its activity is regulated as follows. Allosterically activated by HslU binding. Protease subunit of a proteasome-like degradation complex believed to be a general protein degrading machinery. The sequence is that of ATP-dependent protease subunit HslV from Treponema denticola (strain ATCC 35405 / DSM 14222 / CIP 103919 / JCM 8153 / KCTC 15104).